A 914-amino-acid chain; its full sequence is Probable dipeptidyl-aminopeptidase B (914 aa).

Positions 1-10 are enriched in acidic residues; the sequence is MGKSEADEDA. A disordered region spans residues 1–81; sequence MGKSEADEDA…DQPFLPSRKG (81 aa). At 1–89 the chain is on the cytoplasmic side; it reads MGKSEADEDA…KGSGARARRV (89 aa). Residues 20–34 show a composition bias toward low complexity; that stretch reads SSSAASQTSSDSGLS. Residues 90–110 traverse the membrane as a helical; Signal-anchor for type II membrane protein segment; that stretch reads FWGLLLLCLAGWVLAFVLFLI. Topologically, residues 111–914 are vacuolar; the sequence is QGRSGYSATS…FKRALPVFVH (804 aa). Residues N347 and N638 are each glycosylated (N-linked (GlcNAc...) asparagine). S752 acts as the Charge relay system in catalysis. An N-linked (GlcNAc...) asparagine glycan is attached at N806. Catalysis depends on charge relay system residues D829 and H862.

This sequence belongs to the peptidase S9B family.

Its subcellular location is the vacuole membrane. It catalyses the reaction Release of an N-terminal dipeptide, Xaa-Yaa-|-Zaa-, from a polypeptide, preferentially when Yaa is Pro, provided Zaa is neither Pro nor hydroxyproline.. In terms of biological role, type IV dipeptidyl-peptidase which removes N-terminal dipeptides sequentially from polypeptides having unsubstituted N-termini provided that the penultimate residue is proline. The protein is Probable dipeptidyl-aminopeptidase B (dapB) of Aspergillus terreus (strain NIH 2624 / FGSC A1156).